The following is a 336-amino-acid chain: Dihydrolipoyl dehydrogenase (336 aa).

FAD contacts are provided by residues 34–42 (EKEVVGGIC), Lys51, and Gly115. An intrachain disulfide couples Cys42 to Cys47. Residues 180–184 (GGGVI), Glu203, Val237, and 264–267 (SVGT) contribute to the NAD(+) site. FAD contacts are provided by Asp304 and Ala312.

It belongs to the class-I pyridine nucleotide-disulfide oxidoreductase family. Homodimer. It depends on FAD as a cofactor.

It is found in the cytoplasm. It catalyses the reaction N(6)-[(R)-dihydrolipoyl]-L-lysyl-[protein] + NAD(+) = N(6)-[(R)-lipoyl]-L-lysyl-[protein] + NADH + H(+). Functionally, lipoamide dehydrogenase is a component of the alpha-ketoacid dehydrogenase complexes. The chain is Dihydrolipoyl dehydrogenase (pdhD) from Acholeplasma laidlawii.